Consider the following 208-residue polypeptide: MDDVTKALNLVPMVVEQTSRGERAYDIYSRLLKERLIFLVGPIDDYMANLIVAQLLFLEAENPEKDINIYINSPGGVVTAGMAIYDTMQYIKPAVSTICVGQAASMGALLLASGASGKRYALPNSRVMIHQPLGGFQGQATDIDIHAREILALRARLNEILAKHTGQSLETIAHDTERDNFKSAVDAQAYGLVDQVFGQRQEELIQSS.

The Nucleophile role is filled by Ser105. His130 is an active-site residue.

Belongs to the peptidase S14 family. Fourteen ClpP subunits assemble into 2 heptameric rings which stack back to back to give a disk-like structure with a central cavity, resembling the structure of eukaryotic proteasomes.

The protein localises to the cytoplasm. It carries out the reaction Hydrolysis of proteins to small peptides in the presence of ATP and magnesium. alpha-casein is the usual test substrate. In the absence of ATP, only oligopeptides shorter than five residues are hydrolyzed (such as succinyl-Leu-Tyr-|-NHMec, and Leu-Tyr-Leu-|-Tyr-Trp, in which cleavage of the -Tyr-|-Leu- and -Tyr-|-Trp bonds also occurs).. Cleaves peptides in various proteins in a process that requires ATP hydrolysis. Has a chymotrypsin-like activity. Plays a major role in the degradation of misfolded proteins. The chain is ATP-dependent Clp protease proteolytic subunit from Xylella fastidiosa (strain M23).